A 625-amino-acid polypeptide reads, in one-letter code: SLTGVFPSGLIETKVSAAKITENYQFDSRIRLNSIGFIPNHSKKATIAANCSTFYVVKEDGTIVYTGTATSMFDNDTKETVYIADFSSVNEEGTYYLAVPGVGKSVNFKIAMNVYEDAFKTAMLGMYLLRCGTSVSATYNGIHYSHGPCHTNDAYLDYINGQHTKKDSTKGWHDAGDYNKYVVNAGITVGSMFLAWEHFKDQLEPVALEIPEKNNSIPDFLDELKYEIDWILTMQYPDGSGRVAHKVSTRNFGGFIMPENEHDERFFVPWSSAATADFVAMTAMAARIFRPYDPQYAEKCINAAKVSYEFLKNNPANVFANQSGFSTGEYATVSDADDRLWAAAEMWETLGDEEYLRDFENRAAQFSKKIEADFDWDNVANLGMFTYLLSERPGKNPALVQSIKDSLLSTADSIVRTSQNHGYGRTLGTTYYWGCNGTVVRQTMILQVANKISPNNDYVNAALDAISHVFGRNYYNRSYVTGLGINPPMNPHDRRSGADGIWEPWPGYLVGGGWPGPKDWVDIQDSYQTNEIAINWNAALIYALAGFVNYNSPQNEVLYGDVNDDGKVNSTDLTLLKRYVLKAVSTLPSSKAEKNADVNRDGRVNSSDVTILSRYLIRVIEKLPI.

Positions 1–17 are cleaved as a signal peptide; that stretch reads SLTGVFPSGLIETKVSA. Asp177 functions as the Nucleophile in the catalytic mechanism. Active-site residues include His492 and Asp522. The active-site Proton donor is the Glu531. Residues 555–625 form the Dockerin domain; it reads NEVLYGDVND…LIRVIEKLPI (71 aa).

Belongs to the glycosyl hydrolase 9 (cellulase E) family. Requires Ca(2+) as cofactor.

The catalysed reaction is Endohydrolysis of (1-&gt;4)-beta-D-glucosidic linkages in cellulose, lichenin and cereal beta-D-glucans.. This enzyme catalyzes the endohydrolysis of 1,4-beta-glucosidic linkages in cellulose, lichenin and cereal beta-D-glucans. This chain is Endoglucanase D (celD), found in Acetivibrio thermocellus (Hungateiclostridium thermocellum).